The sequence spans 492 residues: Steroid 21-hydroxylase (492 aa).

The heme b site is built by R92 and K121. R232 provides a ligand contact to 17alpha-hydroxyprogesterone. R232 provides a ligand contact to progesterone. Residues H364, R425, and C427 each coordinate heme b.

This sequence belongs to the cytochrome P450 family. Heme b is required as a cofactor.

It is found in the endoplasmic reticulum membrane. It localises to the microsome membrane. The enzyme catalyses progesterone + reduced [NADPH--hemoprotein reductase] + O2 = 21-hydroxyprogesterone + oxidized [NADPH--hemoprotein reductase] + H2O + H(+). It carries out the reaction 17alpha-hydroxyprogesterone + reduced [NADPH--hemoprotein reductase] + O2 = 11-deoxycortisol + oxidized [NADPH--hemoprotein reductase] + H2O + H(+). Functionally, a cytochrome P450 monooxygenase that plays a major role in adrenal steroidogenesis. Catalyzes the hydroxylation at C-21 of progesterone and 17alpha-hydroxyprogesterone to respectively form 11-deoxycorticosterone and 11-deoxycortisol, intermediate metabolites in the biosynthetic pathway of mineralocorticoids and glucocorticoids. Mechanistically, uses molecular oxygen inserting one oxygen atom into a substrate, and reducing the second into a water molecule, with two electrons provided by NADPH via cytochrome P450 reductase (CPR; NADPH-ferrihemoprotein reductase). This is Steroid 21-hydroxylase (CYP21) from Sus scrofa (Pig).